The primary structure comprises 131 residues: Global transcriptional regulator Spx (131 aa).

A disulfide bridge connects residues Cys-10 and Cys-13.

Belongs to the ArsC family. Spx subfamily. As to quaternary structure, interacts with the C-terminal domain of the alpha subunit of the RNAP.

It localises to the cytoplasm. Global transcriptional regulator that plays a key role in stress response and exerts either positive or negative regulation of genes. Acts by interacting with the C-terminal domain of the alpha subunit of the RNA polymerase (RNAP). This interaction can enhance binding of RNAP to the promoter region of target genes and stimulate their transcription, or block interaction of RNAP with activator. The chain is Global transcriptional regulator Spx from Staphylococcus haemolyticus (strain JCSC1435).